Consider the following 350-residue polypeptide: Deoxyhypusine synthase-like protein (350 aa).

This sequence belongs to the deoxyhypusine synthase family.

This chain is Deoxyhypusine synthase-like protein, found in Chlorobaculum parvum (strain DSM 263 / NCIMB 8327) (Chlorobium vibrioforme subsp. thiosulfatophilum).